We begin with the raw amino-acid sequence, 2197 residues long: Non-reducing polyketide synthase Preu6 (2197 aa).

The N-terminal acylcarrier protein transacylase domain (SAT) stretch occupies residues 14 to 253; the sequence is FFCPQSRAPP…HNPENAELAK (240 aa). One can recognise a Ketosynthase family 3 (KS3) domain in the interval 375-797; the sequence is DDAIAITGAS…GSNAAVICVE (423 aa). Residues C546, H681, and H720 each act as for beta-ketoacyl synthase activity in the active site. Residues 901-1198 form a malonyl-CoA:ACP transacylase (MAT) domain region; it reads LVFSGQNTNA…SKPDSQVFQS (298 aa). S988 (for acyl/malonyl transferase activity) is an active-site residue. The interval 1258–1282 is disordered; it reads ATEASQASTTSDTIQSTPTQTVQSP. Polar residues predominate over residues 1260 to 1281; sequence EASQASTTSDTIQSTPTQTVQS. The tract at residues 1276–1403 is N-terminal hotdog fold; that stretch reads TQTVQSPPKL…GRVILTESSV (128 aa). Residues 1276–1576 enclose the PKS/mFAS DH domain; it reads TQTVQSPPKL…FNKMEISKLA (301 aa). The product template (PT) domain stretch occupies residues 1284-1575; the sequence is KLISRLASLQ…RFNKMEISKL (292 aa). H1310 serves as the catalytic Proton acceptor; for dehydratase activity. The C-terminal hotdog fold stretch occupies residues 1424-1576; the sequence is AEKLMSSRAY…FNKMEISKLA (153 aa). D1487 functions as the Proton donor; for dehydratase activity in the catalytic mechanism. Over residues 1581-1591 the composition is skewed to polar residues; it reads SVNASSPTGGR. Positions 1581–1614 are disordered; it reads SVNASSPTGGRTQPPAAPKTQAQPMASRPSPTPL. Carrier domains follow at residues 1639–1719 and 1748–1824; these read NDIG…SQKM and NSIT…ATPP. O-(pantetheine 4'-phosphoryl)serine occurs at positions 1673 and 1782. The segment at 1817-1841 is disordered; the sequence is LGASATPPSTTGSSTPGDISTAATT. The span at 1818-1833 shows a compositional bias: low complexity; the sequence is GASATPPSTTGSSTPG. The tract at residues 1870–2197 is thioesterase (TE) domain; it reads DSYQVKTVEY…PGLDFLIQNA (328 aa). Active-site for thioesterase activity residues include S1990 and D2137.

Pantetheine 4'-phosphate is required as a cofactor.

It catalyses the reaction 6 malonyl-CoA + 2 acetyl-CoA + 5 H(+) = o-orsellinate depside + 6 CO2 + 8 CoA + H2O. Functionally, non-reducing polyketide synthase; part of a gene cluster that mediates the biosynthesis of a yet unidentified natural product. The first step in the pathway is performed by Preu6 that condenses 2 acetyl-CoA starter units with 6 malonyl-CoA units to produce lecanoric acid (LA), also known as orsellinate depside, an intermediate that has significant antifungal activity against the plant pathogen Botryosphaeria berengeriana. The biosynthesis probably occurs via the formation of 2 orsellinate intermediates fused together by the C-terminal thioesterase (TE) domain that finally releases lecanoric acid. In Preussia isomera (Coprophilous fungus), this protein is Non-reducing polyketide synthase Preu6.